Reading from the N-terminus, the 185-residue chain is Threonylcarbamoyl-AMP synthase (185 aa).

The region spanning 4–185 is the YrdC-like domain; it reads SWRVQQAAQD…IATGQVMRAG (182 aa).

It belongs to the SUA5 family. TsaC subfamily.

The protein localises to the cytoplasm. It carries out the reaction L-threonine + hydrogencarbonate + ATP = L-threonylcarbamoyladenylate + diphosphate + H2O. In terms of biological role, required for the formation of a threonylcarbamoyl group on adenosine at position 37 (t(6)A37) in tRNAs that read codons beginning with adenine. Catalyzes the conversion of L-threonine, HCO(3)(-)/CO(2) and ATP to give threonylcarbamoyl-AMP (TC-AMP) as the acyladenylate intermediate, with the release of diphosphate. The polypeptide is Threonylcarbamoyl-AMP synthase (Pseudomonas savastanoi pv. phaseolicola (strain 1448A / Race 6) (Pseudomonas syringae pv. phaseolicola (strain 1448A / Race 6))).